A 474-amino-acid polypeptide reads, in one-letter code: CUGBP Elav-like family member 4 (474 aa).

The sufficient for RNA-binding and MSE-dependent splicing activity stretch occupies residues 1–287 (MYIKMATLAN…AAFAAAQMQQ (287 aa)). The span at 18–28 (LSTNGLGSSPG) shows a compositional bias: polar residues. Residues 18–41 (LSTNGLGSSPGSAGHMNGLSHSPG) form a disordered region. 2 RRM domains span residues 54–135 (IKLF…PADS) and 141–221 (RKLF…FADT). Residues 228 to 247 (RRMQQMAGQMGMFNPMAIPF) are necessary for TNNT2 exon 5 inclusion. The RRM 3 domain occupies 392-467 (PQPPPMIPQQ…KRLKVQLKRP (76 aa)).

Belongs to the CELF/BRUNOL family.

The protein resides in the nucleus. It is found in the cytoplasm. In terms of biological role, RNA-binding protein implicated in the regulation of pre-mRNA alternative splicing. Mediates exon inclusion and/or exclusion in pre-mRNA that are subject to tissue-specific and developmentally regulated alternative splicing. Specifically activates exon 5 inclusion of cardiac isoforms of TNNT2 during heart remodeling at the juvenile to adult transition. Promotes exclusion of both the smooth muscle (SM) and non-muscle (NM) exons in actinin pre-mRNAs. Activates the splicing of MAPT/Tau exon 10. Binds to muscle-specific splicing enhancer (MSE) intronic sites flanking the alternative exon 5 of TNNT2 pre-mRNA. The protein is CUGBP Elav-like family member 4 (CELF4) of Macaca fascicularis (Crab-eating macaque).